We begin with the raw amino-acid sequence, 448 residues long: UDP-N-acetylmuramoylalanine--D-glutamate ligase (448 aa).

112-118 (GSNAKST) contacts ATP.

This sequence belongs to the MurCDEF family.

The protein resides in the cytoplasm. It catalyses the reaction UDP-N-acetyl-alpha-D-muramoyl-L-alanine + D-glutamate + ATP = UDP-N-acetyl-alpha-D-muramoyl-L-alanyl-D-glutamate + ADP + phosphate + H(+). It functions in the pathway cell wall biogenesis; peptidoglycan biosynthesis. Functionally, cell wall formation. Catalyzes the addition of glutamate to the nucleotide precursor UDP-N-acetylmuramoyl-L-alanine (UMA). In Acinetobacter baylyi (strain ATCC 33305 / BD413 / ADP1), this protein is UDP-N-acetylmuramoylalanine--D-glutamate ligase.